Reading from the N-terminus, the 67-residue chain is DNA-directed RNA polymerases I, II, and III subunit RPABC5 (67 aa).

Zn(2+)-binding residues include Cys-7, Cys-10, Cys-44, and Cys-45.

Belongs to the archaeal Rpo10/eukaryotic RPB10 RNA polymerase subunit family. As to quaternary structure, component of the RNA polymerase I (Pol I), RNA polymerase II (Pol II) and RNA polymerase III (Pol III) complexes consisting of at least 13, 12 and 17 subunits, respectively.

It is found in the nucleus. Its function is as follows. DNA-dependent RNA polymerase catalyzes the transcription of DNA into RNA using the four ribonucleoside triphosphates as substrates. Common component of RNA polymerases I, II and III which synthesize ribosomal RNA precursors, mRNA precursors and many functional non-coding RNAs, and a small RNAs, such as 5S rRNA and tRNAs, respectively. Pol II is the central component of the basal RNA polymerase II transcription machinery. Pols are composed of mobile elements that move relative to each other. In Pol II, RBP10 is part of the core element with the central large cleft. The polypeptide is DNA-directed RNA polymerases I, II, and III subunit RPABC5 (Caenorhabditis briggsae).